A 478-amino-acid chain; its full sequence is Chromosomal replication initiator protein DnaA (478 aa).

A domain I, interacts with DnaA modulators region spans residues 1-82 (MHTMNKTAES…ELGKNAKLLY (82 aa)). The segment at 82–140 (YKIKMENTYGNKLPFTEQLPSAHRSPVRTQEIDVPVQQKNPELRNPFIIPGIRNLKIES) is domain II. Positions 141–358 (QLNANYSFDN…GAIISLIAQS (218 aa)) are domain III, AAA+ region. ATP is bound by residues Gly-186, Gly-188, Lys-189, and Thr-190. The domain IV, binds dsDNA stretch occupies residues 359–478 (SFNKKEVTLE…VDDINKKLSL (120 aa)).

This sequence belongs to the DnaA family. Oligomerizes as a right-handed, spiral filament on DNA at oriC.

The protein localises to the cytoplasm. In terms of biological role, plays an essential role in the initiation and regulation of chromosomal replication. ATP-DnaA binds to the origin of replication (oriC) to initiate formation of the DNA replication initiation complex once per cell cycle. Binds the DnaA box (a 9 base pair repeat at the origin) and separates the double-stranded (ds)DNA. Forms a right-handed helical filament on oriC DNA; dsDNA binds to the exterior of the filament while single-stranded (ss)DNA is stabiized in the filament's interior. The ATP-DnaA-oriC complex binds and stabilizes one strand of the AT-rich DNA unwinding element (DUE), permitting loading of DNA polymerase. After initiation quickly degrades to an ADP-DnaA complex that is not apt for DNA replication. Binds acidic phospholipids. This Flavobacterium psychrophilum (strain ATCC 49511 / DSM 21280 / CIP 103535 / JIP02/86) protein is Chromosomal replication initiator protein DnaA.